The primary structure comprises 445 residues: FAS-associated factor 2-B (445 aa).

Positions 12–48 (DQTEKLLQFQDLTGIESIDQCRQTLQQHNWNIETAVQ) constitute a UBA domain. A coiled-coil region spans residues 275-353 (SERLEREERN…ERKSECLPAE (79 aa)). Residues 302–355 (RADQEKERKKKEKQDQKRREEEEAQRKQMLEERKKRNLEEEKERKSECLPAEPV) are disordered. Basic and acidic residues predominate over residues 303–348 (ADQEKERKKKEKQDQKRREEEEAQRKQMLEERKKRNLEEEKERKSE). In terms of domain architecture, UBX spans 357–439 (DHPDNVKIIF…GLSQSQLLFV (83 aa)).

Its subcellular location is the cytoplasm. It localises to the lipid droplet. The protein resides in the endoplasmic reticulum. In terms of biological role, plays an important role in endoplasmic reticulum-associated degradation (ERAD) that mediates ubiquitin-dependent degradation of misfolded endoplasmic reticulum proteins. Involved in inhibition of lipid droplet degradation. Involved in stress granule disassembly. The sequence is that of FAS-associated factor 2-B (faf2-b) from Xenopus laevis (African clawed frog).